The primary structure comprises 324 residues: tRNA N6-adenosine threonylcarbamoyltransferase (324 aa).

3 residues coordinate Fe cation: His-107, His-111, and Tyr-127. Residues 127-131 (YVSGG), Asp-159, Gly-172, Glu-176, and Asn-257 each bind substrate. Asp-285 is a Fe cation binding site.

This sequence belongs to the KAE1 / TsaD family. Monomer. Component of the KEOPS complex that consists of Kae1, Bud32, Cgi121 and Pcc1; the whole complex dimerizes. Fe(2+) serves as cofactor.

The protein localises to the cytoplasm. It catalyses the reaction L-threonylcarbamoyladenylate + adenosine(37) in tRNA = N(6)-L-threonylcarbamoyladenosine(37) in tRNA + AMP + H(+). Its function is as follows. Required for the formation of a threonylcarbamoyl group on adenosine at position 37 (t(6)A37) in tRNAs that read codons beginning with adenine. Is a component of the KEOPS complex that is probably involved in the transfer of the threonylcarbamoyl moiety of threonylcarbamoyl-AMP (TC-AMP) to the N6 group of A37. Kae1 likely plays a direct catalytic role in this reaction, but requires other protein(s) of the complex to fulfill this activity. This is tRNA N6-adenosine threonylcarbamoyltransferase from Pyrococcus furiosus (strain ATCC 43587 / DSM 3638 / JCM 8422 / Vc1).